The following is a 250-amino-acid chain: Small ribosomal subunit protein uS3 (250 aa).

The KH type-2 domain occupies 39 to 111 (IRTLIKNNYP…KVQINIFEVK (73 aa)).

Belongs to the universal ribosomal protein uS3 family. Part of the 30S ribosomal subunit. Forms a tight complex with proteins S10 and S14.

Its function is as follows. Binds the lower part of the 30S subunit head. Binds mRNA in the 70S ribosome, positioning it for translation. The protein is Small ribosomal subunit protein uS3 of Alder yellows phytoplasma.